A 310-amino-acid polypeptide reads, in one-letter code: Coproporphyrin III ferrochelatase (310 aa).

Y13 provides a ligand contact to Fe-coproporphyrin III. An N-methylmesoporphyrin-binding site is contributed by Y13. A Mg(2+)-binding site is contributed by E20. R30 is a Fe-coproporphyrin III binding site. 31-33 serves as a coordination point for N-methylmesoporphyrin; that stretch reads RGR. Residue R46 coordinates Mg(2+). Residues 46–47, S54, and Y125 each bind Fe-coproporphyrin III; that span reads RY. Residues H183 and K188 each coordinate N-methylmesoporphyrin. H183 is a binding site for Fe(2+). Fe(2+) is bound at residue E264. D268 and E272 together coordinate Mg(2+).

Belongs to the ferrochelatase family. As to quaternary structure, monomer. Interacts with frataxin/Fra.

The protein resides in the cytoplasm. The catalysed reaction is Fe-coproporphyrin III + 2 H(+) = coproporphyrin III + Fe(2+). It participates in porphyrin-containing compound metabolism; protoheme biosynthesis. With respect to regulation, stimulated by Mg(2+). Inhibited by Cd(2+). Inhibited by N-methylmesoporphyrin (N-MeMP) and 2,4-disulfonic acid deuteroporphyrin IX (dSDP). Functionally, involved in coproporphyrin-dependent heme b biosynthesis. Catalyzes the insertion of ferrous iron into coproporphyrin III to form Fe-coproporphyrin III. It can also insert iron into protoporphyrin IX. Has weaker activity with 2,4 disulfonate, deuteroporphyrin and 2,4 hydroxyethyl. In vitro, can also use Zn(2+) or Cu(2+). This is Coproporphyrin III ferrochelatase from Bacillus subtilis (strain 168).